The primary structure comprises 323 residues: Pectate lyase A (323 aa).

The N-terminal stretch at Met-1 to Arg-31 is a signal peptide. Asn-95 is a glycosylation site (N-linked (GlcNAc...) asparagine). Residues Asp-136, Asp-165, and Asp-169 each coordinate Ca(2+). Arg-222 is an active-site residue.

It belongs to the polysaccharide lyase 1 family. Ca(2+) serves as cofactor.

The protein resides in the secreted. The catalysed reaction is Eliminative cleavage of (1-&gt;4)-alpha-D-galacturonan to give oligosaccharides with 4-deoxy-alpha-D-galact-4-enuronosyl groups at their non-reducing ends.. Its function is as follows. Pectinolytic enzyme consist of four classes of enzymes: pectin lyase, polygalacturonase, pectin methylesterase and rhamnogalacturonase. Among pectinolytic enzymes, pectin lyase is the most important in depolymerization of pectin, since it cleaves internal glycosidic bonds of highly methylated pectins. Favors pectate, the anion, over pectin, the methyl ester. This is Pectate lyase A (plyA) from Aspergillus niger.